We begin with the raw amino-acid sequence, 386 residues long: Succinate--CoA ligase [ADP-forming] subunit beta (386 aa).

Positions 9-244 constitute an ATP-grasp domain; sequence KELLREFGVA…TTEEDPREVE (236 aa). Residues Lys46, 53–55, Glu99, Ser102, and Glu107 each bind ATP; that span reads GRG. The Mg(2+) site is built by Asn199 and Asp213. Residues Asn264 and 321–323 each bind substrate; that span reads GIM.

The protein belongs to the succinate/malate CoA ligase beta subunit family. In terms of assembly, heterotetramer of two alpha and two beta subunits. Mg(2+) serves as cofactor.

The catalysed reaction is succinate + ATP + CoA = succinyl-CoA + ADP + phosphate. It carries out the reaction GTP + succinate + CoA = succinyl-CoA + GDP + phosphate. Its pathway is carbohydrate metabolism; tricarboxylic acid cycle; succinate from succinyl-CoA (ligase route): step 1/1. Its function is as follows. Succinyl-CoA synthetase functions in the citric acid cycle (TCA), coupling the hydrolysis of succinyl-CoA to the synthesis of either ATP or GTP and thus represents the only step of substrate-level phosphorylation in the TCA. The beta subunit provides nucleotide specificity of the enzyme and binds the substrate succinate, while the binding sites for coenzyme A and phosphate are found in the alpha subunit. In Exiguobacterium sp. (strain ATCC BAA-1283 / AT1b), this protein is Succinate--CoA ligase [ADP-forming] subunit beta.